Here is a 246-residue protein sequence, read N- to C-terminus: Octanoyltransferase (246 aa).

Residues 30–227 enclose the BPL/LPL catalytic domain; it reads GRIGNTLLLL…QFGRVFGHQV (198 aa). Substrate contacts are provided by residues 75–82, 155–157, and 168–170; these read RGGDVTYH, AIG, and GFA. Catalysis depends on C186, which acts as the Acyl-thioester intermediate.

Belongs to the LipB family.

The protein localises to the cytoplasm. It catalyses the reaction octanoyl-[ACP] + L-lysyl-[protein] = N(6)-octanoyl-L-lysyl-[protein] + holo-[ACP] + H(+). It participates in protein modification; protein lipoylation via endogenous pathway; protein N(6)-(lipoyl)lysine from octanoyl-[acyl-carrier-protein]: step 1/2. Catalyzes the transfer of endogenously produced octanoic acid from octanoyl-acyl-carrier-protein onto the lipoyl domains of lipoate-dependent enzymes. Lipoyl-ACP can also act as a substrate although octanoyl-ACP is likely to be the physiological substrate. This is Octanoyltransferase from Acidobacterium capsulatum (strain ATCC 51196 / DSM 11244 / BCRC 80197 / JCM 7670 / NBRC 15755 / NCIMB 13165 / 161).